Consider the following 34-residue polypeptide: MSDINTARLPFFQPPEFRPPCVGDDIEMVLTRGE.

A propeptide spanning residues 1-10 is cleaved from the precursor; the sequence is MSDINTARLP. Positions 11-20 form a cross-link, cyclopeptide (Phe-Pro); it reads FFQPPEFRPP. The propeptide occupies 21–34; sequence CVGDDIEMVLTRGE.

It belongs to the MSDIN fungal toxin family. Post-translationally, processed by the macrocyclase-peptidase enzyme POPB to yield a toxic cyclic decapeptide. POPB first removes 10 residues from the N-terminus. Conformational trapping of the remaining peptide forces the enzyme to release this intermediate rather than proceed to macrocyclization. The enzyme rebinds the remaining peptide in a different conformation and catalyzes macrocyclization of the N-terminal 10 residues.

Functionally, probable toxin that belongs to the MSDIN-like toxin family responsible for a large number of food poisoning cases and deaths. In Amanita bisporigera (Destroying angel), this protein is MSDIN-like toxin proprotein 3.